Here is a 103-residue protein sequence, read N- to C-terminus: Large ribosomal subunit protein uL24 (103 aa).

Belongs to the universal ribosomal protein uL24 family. In terms of assembly, part of the 50S ribosomal subunit.

One of two assembly initiator proteins, it binds directly to the 5'-end of the 23S rRNA, where it nucleates assembly of the 50S subunit. Functionally, one of the proteins that surrounds the polypeptide exit tunnel on the outside of the subunit. This chain is Large ribosomal subunit protein uL24, found in Haemophilus influenzae (strain ATCC 51907 / DSM 11121 / KW20 / Rd).